A 341-amino-acid polypeptide reads, in one-letter code: GTPase Obg (341 aa).

The region spanning 1–159 (MKFLDQAKVY…RAIWLRLKLI (159 aa)) is the Obg domain. The region spanning 160 to 327 (ADAGLVGLPN…VLRAGAHIIE (168 aa)) is the OBG-type G domain. Residues 166 to 173 (GLPNAGKS), 191 to 195 (FTTLH), 212 to 215 (DIPG), 279 to 282 (SQID), and 308 to 310 (SAV) each bind GTP. Residues S173 and T193 each coordinate Mg(2+).

The protein belongs to the TRAFAC class OBG-HflX-like GTPase superfamily. OBG GTPase family. In terms of assembly, monomer. It depends on Mg(2+) as a cofactor.

It localises to the cytoplasm. Its function is as follows. An essential GTPase which binds GTP, GDP and possibly (p)ppGpp with moderate affinity, with high nucleotide exchange rates and a fairly low GTP hydrolysis rate. Plays a role in control of the cell cycle, stress response, ribosome biogenesis and in those bacteria that undergo differentiation, in morphogenesis control. This is GTPase Obg from Bartonella tribocorum (strain CIP 105476 / IBS 506).